A 128-amino-acid chain; its full sequence is Fluoride-specific ion channel FluC 2 (128 aa).

The next 4 membrane-spanning stretches (helical) occupy residues 13–35, 40–59, 71–93, and 97–119; these read ALVAVGGAVGAVLRYTVAQAIAG, LAANAAGSLALGALAYEAAA, LLGTGCLSAFTTYSTFAVQTAGL, and WMAANVATTYALGFAGVLVGRAI.

It belongs to the fluoride channel Fluc/FEX (TC 1.A.43) family.

It is found in the cell membrane. It carries out the reaction fluoride(in) = fluoride(out). Fluoride-specific ion channel. Important for reducing fluoride concentration in the cell, thus reducing its toxicity. This chain is Fluoride-specific ion channel FluC 2, found in Halobacterium salinarum (strain ATCC 700922 / JCM 11081 / NRC-1) (Halobacterium halobium).